The following is a 617-amino-acid chain: Chaperone protein HscA homolog (617 aa).

This sequence belongs to the heat shock protein 70 family.

Functionally, chaperone involved in the maturation of iron-sulfur cluster-containing proteins. Has a low intrinsic ATPase activity which is markedly stimulated by HscB. The chain is Chaperone protein HscA homolog from Photobacterium profundum (strain SS9).